The chain runs to 297 residues: Pyridoxal 5'-phosphate synthase subunit SNZ1 (297 aa).

Asp23 contacts D-ribose 5-phosphate. The active-site Schiff-base intermediate with D-ribose 5-phosphate is Lys80. A D-ribose 5-phosphate-binding site is contributed by Gly152. Arg164 provides a ligand contact to D-glyceraldehyde 3-phosphate. Residues Gly214 and Gly235–Ser236 contribute to the D-ribose 5-phosphate site.

The protein belongs to the PdxS/SNZ family. Homohexamer. Interacts with AIM18.

It carries out the reaction aldehydo-D-ribose 5-phosphate + D-glyceraldehyde 3-phosphate + L-glutamine = pyridoxal 5'-phosphate + L-glutamate + phosphate + 3 H2O + H(+). The protein operates within cofactor biosynthesis; pyridoxal 5'-phosphate biosynthesis. In terms of biological role, catalyzes the formation of pyridoxal 5'-phosphate from ribose 5-phosphate (RBP), glyceraldehyde 3-phosphate (G3P) and ammonia. The ammonia is provided by a SNO isoform. Can also use ribulose 5-phosphate and dihydroxyacetone phosphate as substrates, resulting from enzyme-catalyzed isomerization of RBP and G3P, respectively. In Saccharomyces cerevisiae (strain ATCC 204508 / S288c) (Baker's yeast), this protein is Pyridoxal 5'-phosphate synthase subunit SNZ1 (SNZ1).